A 509-amino-acid polypeptide reads, in one-letter code: Glucose-1-phosphate adenylyltransferase large subunit 4, chloroplastic/amyloplastic (509 aa).

The N-terminal 36 residues, 1–36 (MATCSWAATTAAAAPPRPPARCRSRVAALRRTAAAS), are a transit peptide targeting the chloroplast.

This sequence belongs to the bacterial/plant glucose-1-phosphate adenylyltransferase family. Heterotetramer composed of two small and two large subunits. In terms of tissue distribution, expressed in leaves and stems.

It localises to the plastid. Its subcellular location is the chloroplast. It catalyses the reaction alpha-D-glucose 1-phosphate + ATP + H(+) = ADP-alpha-D-glucose + diphosphate. It participates in glycan biosynthesis; starch biosynthesis. With respect to regulation, activated by 3'phosphoglycerate, inhibited by orthophosphate. Allosteric regulation. Functionally, involved in synthesis of starch. Catalyzes the synthesis of ADP-glucose, a molecule that serves as an activated glycosyl donor for alpha-1,4-glucan synthesis. Essential for starch synthesis in leaf chloroplasts. The sequence is that of Glucose-1-phosphate adenylyltransferase large subunit 4, chloroplastic/amyloplastic from Oryza sativa subsp. japonica (Rice).